Here is a 241-residue protein sequence, read N- to C-terminus: Endodeoxyribonuclease NucC (241 aa).

Residues Asp73, Glu104, and Lys106 contribute to the active site. Positions 73 and 104 each coordinate Mg(2+).

The protein belongs to the NucC endonuclease family. As to quaternary structure, self-oligomerizes. Forms homotrimers; in the presence of cAAA the trimers associate face-to-face to form homohexamers. The 2 cAAA-binding sites are on the exterior of the hexamer at the three-way junction, there are maximally 2 cyclic nucleotides per hexamer. Requires Mg(2+) as cofactor.

Its activity is regulated as follows. Activated by cAAA and to a lesser extent cAA; both cyclic nucleotides are products of its cognate CD-NTase. Cyclic nucleotide binding causes hexamerization. Effector DNase of a CBASS antivirus system. CBASS (cyclic oligonucleotide-based antiphage signaling system) provides immunity against bacteriophage. The CD-NTase protein synthesizes cyclic nucleotides in response to infection; these serve as specific second messenger signals. The signals activate a diverse range of effectors, leading to bacterial cell death and thus abortive phage infection. A type III-C(AAA) CBASS system. Its function is as follows. A cyclic nucleotide-activated dsDNase. In the presence of 3',3',3'-cyclic AMP-AMP-AMP (cAAA) and to a lesser extent cyclic-di-AMP (c-di-AMP), endonucleolytically degrades dsDNA. Binds one cAAA in a pocket on one surface of the trimer; cAAA binding promotes hexamerization which is probably necessary for nuclease activation. The nuclease digests dsDNA to about 50 bp lengths. DNA has been modeled to contact a pair of juxtaposed active sites (one from each layer of the hexamer), accounting for cleavage on both strands. The chain is Endodeoxyribonuclease NucC from Pseudomonas aeruginosa.